The primary structure comprises 231 residues: MKQYNDLFKIIHREGYIFIASFALVSFLLASFNEKLGCMGFIATAWCIYFFRNPDRFVPIGNDLVISPADGVIQEIKEALPPAELGLGDVEMIRVSIFLNIFNVHVNRIPANGKILALHYNPGKFFNASLDKASVYNERQSVLMETEQGQKIAFVQIAGLIARRIVCDLEESNEVKAGERYGIIRFGSRVDVYLPLKTALLVSKGQTAIGGETIIADFGRKKTAELQFERK.

Catalysis depends on Ser188, which acts as the Schiff-base intermediate with substrate; via pyruvic acid. A Pyruvic acid (Ser); by autocatalysis modification is found at Ser188.

This sequence belongs to the phosphatidylserine decarboxylase family. PSD-A subfamily. In terms of assembly, heterodimer of a large membrane-associated beta subunit and a small pyruvoyl-containing alpha subunit. Pyruvate is required as a cofactor. Is synthesized initially as an inactive proenzyme. Formation of the active enzyme involves a self-maturation process in which the active site pyruvoyl group is generated from an internal serine residue via an autocatalytic post-translational modification. Two non-identical subunits are generated from the proenzyme in this reaction, and the pyruvate is formed at the N-terminus of the alpha chain, which is derived from the carboxyl end of the proenzyme. The post-translation cleavage follows an unusual pathway, termed non-hydrolytic serinolysis, in which the side chain hydroxyl group of the serine supplies its oxygen atom to form the C-terminus of the beta chain, while the remainder of the serine residue undergoes an oxidative deamination to produce ammonia and the pyruvoyl prosthetic group on the alpha chain.

The protein localises to the cell membrane. The enzyme catalyses a 1,2-diacyl-sn-glycero-3-phospho-L-serine + H(+) = a 1,2-diacyl-sn-glycero-3-phosphoethanolamine + CO2. The protein operates within phospholipid metabolism; phosphatidylethanolamine biosynthesis; phosphatidylethanolamine from CDP-diacylglycerol: step 2/2. Functionally, catalyzes the formation of phosphatidylethanolamine (PtdEtn) from phosphatidylserine (PtdSer). The chain is Phosphatidylserine decarboxylase proenzyme from Rickettsia bellii (strain OSU 85-389).